The following is a 690-amino-acid chain: Elongation factor G (690 aa).

The region spanning 8 to 283 (SRCRNIGIMA…AVVDFLPSPS (276 aa)) is the tr-type G domain. GTP contacts are provided by residues 17 to 24 (AHIDAGKT), 81 to 85 (DTPGH), and 135 to 138 (NKMD).

It belongs to the TRAFAC class translation factor GTPase superfamily. Classic translation factor GTPase family. EF-G/EF-2 subfamily.

It localises to the cytoplasm. Its function is as follows. Catalyzes the GTP-dependent ribosomal translocation step during translation elongation. During this step, the ribosome changes from the pre-translocational (PRE) to the post-translocational (POST) state as the newly formed A-site-bound peptidyl-tRNA and P-site-bound deacylated tRNA move to the P and E sites, respectively. Catalyzes the coordinated movement of the two tRNA molecules, the mRNA and conformational changes in the ribosome. This Anaplasma marginale (strain St. Maries) protein is Elongation factor G.